A 341-amino-acid polypeptide reads, in one-letter code: Methionine import ATP-binding protein MetN 1 (341 aa).

The ABC transporter domain occupies 2–241; it reads IEFRQVSKSF…PKTTIAQNFV (240 aa). Position 38–45 (38–45) interacts with ATP; sequence GYSGAGKS.

The protein belongs to the ABC transporter superfamily. Methionine importer (TC 3.A.1.24) family. The complex is composed of two ATP-binding proteins (MetN), two transmembrane proteins (MetI) and a solute-binding protein (MetQ).

It localises to the cell membrane. It catalyses the reaction L-methionine(out) + ATP + H2O = L-methionine(in) + ADP + phosphate + H(+). It carries out the reaction D-methionine(out) + ATP + H2O = D-methionine(in) + ADP + phosphate + H(+). Its function is as follows. Part of the ABC transporter complex MetNIQ involved in methionine import. Responsible for energy coupling to the transport system. The sequence is that of Methionine import ATP-binding protein MetN 1 from Staphylococcus aureus (strain Mu50 / ATCC 700699).